The chain runs to 293 residues: Formamidopyrimidine-DNA glycosylase (293 aa).

Residue P2 is the Schiff-base intermediate with DNA of the active site. The active-site Proton donor is E3. Catalysis depends on K58, which acts as the Proton donor; for beta-elimination activity. Residues H104, R123, and K166 each contribute to the DNA site. The FPG-type zinc finger occupies 257 to 293; the sequence is AVYDRESEPCRTKGCGGVVKRFVQNGRSTFCCPKCQK. R283 (proton donor; for delta-elimination activity) is an active-site residue.

This sequence belongs to the FPG family. In terms of assembly, monomer. Zn(2+) is required as a cofactor.

It carries out the reaction Hydrolysis of DNA containing ring-opened 7-methylguanine residues, releasing 2,6-diamino-4-hydroxy-5-(N-methyl)formamidopyrimidine.. It catalyses the reaction 2'-deoxyribonucleotide-(2'-deoxyribose 5'-phosphate)-2'-deoxyribonucleotide-DNA = a 3'-end 2'-deoxyribonucleotide-(2,3-dehydro-2,3-deoxyribose 5'-phosphate)-DNA + a 5'-end 5'-phospho-2'-deoxyribonucleoside-DNA + H(+). Its function is as follows. Involved in base excision repair of DNA damaged by oxidation or by mutagenic agents. Acts as a DNA glycosylase that recognizes and removes damaged bases. Has a preference for oxidized purines, such as 7,8-dihydro-8-oxoguanine (8-oxoG). Has AP (apurinic/apyrimidinic) lyase activity and introduces nicks in the DNA strand. Cleaves the DNA backbone by beta-delta elimination to generate a single-strand break at the site of the removed base with both 3'- and 5'-phosphates. This is Formamidopyrimidine-DNA glycosylase from Rhodopseudomonas palustris (strain BisA53).